We begin with the raw amino-acid sequence, 332 residues long: Methionine synthase (332 aa).

Zn(2+)-binding residues include histidine 211, cysteine 213, and cysteine 296.

The protein belongs to the archaeal MetE family. Zn(2+) is required as a cofactor.

It participates in amino-acid biosynthesis; L-methionine biosynthesis via de novo pathway. Its function is as follows. Catalyzes the transfer of a methyl group to L-homocysteine resulting in methionine formation. The physiological methyl donor is unknown. The sequence is that of Methionine synthase from Saccharolobus solfataricus (strain ATCC 35092 / DSM 1617 / JCM 11322 / P2) (Sulfolobus solfataricus).